Here is a 415-residue protein sequence, read N- to C-terminus: Gamma-glutamyl phosphate reductase (415 aa).

The protein belongs to the gamma-glutamyl phosphate reductase family.

The protein resides in the cytoplasm. The catalysed reaction is L-glutamate 5-semialdehyde + phosphate + NADP(+) = L-glutamyl 5-phosphate + NADPH + H(+). It participates in amino-acid biosynthesis; L-proline biosynthesis; L-glutamate 5-semialdehyde from L-glutamate: step 2/2. Catalyzes the NADPH-dependent reduction of L-glutamate 5-phosphate into L-glutamate 5-semialdehyde and phosphate. The product spontaneously undergoes cyclization to form 1-pyrroline-5-carboxylate. The sequence is that of Gamma-glutamyl phosphate reductase from Cutibacterium acnes (strain DSM 16379 / KPA171202) (Propionibacterium acnes).